The primary structure comprises 107 residues: Ferredoxin (107 aa).

2 consecutive 4Fe-4S ferredoxin-type domains span residues 2 to 30 (TYVV…YEGE) and 31 to 60 (FMLV…PETP). [3Fe-4S] cluster contacts are provided by Cys9 and Cys17. [4Fe-4S] cluster is bound by residues Cys21, Cys40, Cys43, and Cys46. Cys50 is a binding site for [3Fe-4S] cluster.

It depends on [4Fe-4S] cluster as a cofactor. The cofactor is [3Fe-4S] cluster.

In terms of biological role, ferredoxins are iron-sulfur proteins that transfer electrons in a wide variety of metabolic reactions. The sequence is that of Ferredoxin (fdxA) from Rickettsia bellii (strain RML369-C).